The sequence spans 2522 residues: Neurogenic locus notch homolog protein 1 (2522 aa).

Residues 1–19 (MYRIGLLVLIWSLLGLAQG) form the signal peptide. EGF-like domains lie at 20–57 (LRCT…ERCQ), 58–99 (YPNP…KVCL), 102–140 (VDNA…DSCQ), and 141–177 (QADP…ATCK). Topologically, residues 20 to 1730 (LRCTQTAEMC…ETAKPPPPLY (1711 aa)) are extracellular. 33 disulfide bridges follow: Cys22–Cys35, Cys29–Cys45, Cys47–Cys56, Cys62–Cys74, Cys68–Cys87, Cys89–Cys98, Cys106–Cys117, Cys111–Cys128, Cys130–Cys139, Cys145–Cys156, Cys150–Cys165, Cys167–Cys176, Cys183–Cys194, Cys188–Cys203, Cys205–Cys214, Cys221–Cys232, Cys226–Cys242, Cys244–Cys253, Cys260–Cys271, Cys265–Cys280, Cys282–Cys291, Cys298–Cys311, Cys305–Cys320, Cys322–Cys331, Cys338–Cys349, Cys343–Cys358, Cys360–Cys369, Cys375–Cys386, Cys380–Cys397, Cys399–Cys408, Cys415–Cys428, Cys422–Cys437, and Cys439–Cys448. Positions 179-215 (DINECSQNPCRNGGQCLNEFGSYRCNCQNRFTGRNCE) constitute an EGF-like 5; calcium-binding domain. The 38-residue stretch at 217–254 (PYVPCNPSPCLNGGTCRQTDDTSYECTCLPGFSGQNCE) folds into the EGF-like 6 domain. Thr231 is a glycosylation site (O-linked (Fuc...) threonine; alternate). An O-linked (GalNAc...) threonine; alternate glycan is attached at Thr231. Residues 256 to 292 (NIDDCPSNNCRNGGTCVDGVNTYNCQCPPDWTGQYCT) enclose the EGF-like 7; calcium-binding domain. One can recognise an EGF-like 8; calcium-binding domain in the interval 294-332 (DVDECQLMPNACQNGGTCHNTYGGYNCVCVNGWTGEDCS). Positions 334-370 (NIDDCANAACHSGATCHDRVASFFCECPHGRTGLLCH) constitute an EGF-like 9; calcium-binding domain. The EGF-like 10 domain maps to 371 to 409 (LDNACISNPCNEGSNCDTNPVNGKAICTCPPGYTGPACN). Residues 411–449 (DVDECSLGANPCEHGGRCTNTLGSFQCNCPQGYAGPRCE) enclose the EGF-like 11; calcium-binding domain. Thr431 and Ser434 together coordinate Ca(2+). Ser434 carries an O-linked (Glc...) serine glycan. Asp451, Val452, and Glu454 together coordinate Ca(2+). The EGF-like 12; calcium-binding domain occupies 451 to 487 (DVNECLSNPCQNDATCLDQIGEFQCICMPGYEGLYCE). 3 disulfide bridges follow: Cys455–Cys466, Cys460–Cys475, and Cys477–Cys486. Ser457 is a glycosylation site (O-linked (Glc...) serine). O-linked (Fuc...) threonine glycosylation occurs at Thr465. Residues Asp468 and Gln469 each coordinate Ca(2+). Asn489, Ile490, and Glu492 together coordinate Ca(2+). One can recognise an EGF-like 13; calcium-binding domain in the interval 489-525 (NIDECASNPCLHNGKCVDKINEFHCECPTGFNGNLCQ). 75 cysteine pairs are disulfide-bonded: Cys493/Cys504, Cys498/Cys513, Cys515/Cys524, Cys531/Cys542, Cys536/Cys551, Cys553/Cys562, Cys569/Cys579, Cys574/Cys588, Cys590/Cys599, Cys606/Cys617, Cys611/Cys626, Cys628/Cys637, Cys644/Cys654, Cys649/Cys663, Cys665/Cys674, Cys681/Cys692, Cys686/Cys701, Cys703/Cys712, Cys719/Cys729, Cys724/Cys738, Cys740/Cys749, Cys756/Cys767, Cys761/Cys776, Cys778/Cys787, Cys794/Cys805, Cys799/Cys814, Cys816/Cys825, Cys832/Cys843, Cys837/Cys854, Cys856/Cys865, Cys872/Cys883, Cys877/Cys892, Cys894/Cys903, Cys910/Cys921, Cys915/Cys930, Cys932/Cys941, Cys948/Cys959, Cys953/Cys968, Cys970/Cys979, Cys986/Cys997, Cys991/Cys1006, Cys1008/Cys1017, Cys1024/Cys1035, Cys1029/Cys1044, Cys1046/Cys1055, Cys1062/Cys1073, Cys1067/Cys1082, Cys1084/Cys1093, Cys1100/Cys1121, Cys1115/Cys1130, Cys1132/Cys1141, Cys1148/Cys1159, Cys1153/Cys1168, Cys1170/Cys1179, Cys1186/Cys1197, Cys1191/Cys1206, Cys1208/Cys1217, Cys1224/Cys1243, Cys1237/Cys1252, Cys1254/Cys1263, Cys1270/Cys1283, Cys1275/Cys1292, Cys1294/Cys1303, Cys1310/Cys1321, Cys1315/Cys1333, Cys1335/Cys1344, Cys1351/Cys1362, Cys1356/Cys1371, Cys1373/Cys1382, Cys1390/Cys1401, Cys1395/Cys1412, Cys1414/Cys1423, Cys1447/Cys1470, Cys1452/Cys1465, and Cys1461/Cys1477. O-linked (Glc...) serine glycosylation occurs at Ser495. Ca(2+)-binding residues include Asp506 and Lys507. The EGF-like 14; calcium-binding domain maps to 527-563 (DVDECASTPCKNGAKCLDGPNSYTCQCTEGFTGRHCE). In terms of domain architecture, EGF-like 15; calcium-binding spans 565-600 (DINECIPDPCHYGTCKDGIATFTCLCRPGYTGRLCD). Residues 602-638 (DINECLSQPCQNGGQCTDRENGYICTCPKGTTGVNCE) form the EGF-like 16; calcium-binding domain. Positions 640-675 (NLDDCASNPCDYGKCIDKIDGYECTCEPGYTGKMCN) constitute an EGF-like 17; calcium-binding domain. The EGF-like 18; calcium-binding domain occupies 677 to 713 (NIDECASNPCRNGGTCKDKINGFTCVCPDGYHDHMCL). Residues 715–750 (EVNECNSNPCIHGTCHDGINGYKCDCDAGWSGSNCD) enclose the EGF-like 19; calcium-binding domain. An EGF-like 20; calcium-binding domain is found at 752-788 (NNNECESNPCMNGGTCKDMTGAYICTCRAGFSGPNCQ). The EGF-like 21; calcium-binding domain maps to 790-826 (NINECASNPCLNRGTCIDDVAGYKCNCMLPYTGAICE). Positions 828–866 (VLAPCSGSPCKNGGRCKESEDYETFSCECPPGWQGQTCE) constitute an EGF-like 22 domain. Positions 868–904 (DMNECVNRPCRNGAMCQNTNGSYKCNCKPGYAGRHCE) constitute an EGF-like 23; calcium-binding domain. The N-linked (GlcNAc...) asparagine glycan is linked to Asn887. The EGF-like 24; calcium-binding domain maps to 906 to 942 (DIDDCQPNPCHNGGSCSDGINMFFCNCPAGFRGPKCE). Residues 944–980 (DINECASNPCKNGANCTDCVNSYTCTCQPGFSGIHCE) enclose the EGF-like 25; calcium-binding domain. Residue Asn958 is glycosylated (N-linked (GlcNAc...) asparagine). Positions 982–1018 (NTPDCTESSCFNGGTCIDGINTFSCQCPPGFTGNYCQ) constitute an EGF-like 26 domain. In terms of domain architecture, EGF-like 27; calcium-binding spans 1020 to 1056 (DINECDSKPCLNGGTCQDSYGAYKCTCPQGYTGLNCQ). 2 EGF-like domains span residues 1058-1094 (LVRW…VYCD) and 1096-1142 (PSVS…SYCE). The region spanning 1144–1180 (QVDECSPNPCQNGATCTDYLGGYSCECVAGYHGVNCS) is the EGF-like 30; calcium-binding domain. A glycan (N-linked (GlcNAc...) asparagine) is linked at Asn1178. The region spanning 1182-1218 (EINECLSHPCHNGGTCIDLINTYKCSCPRGTQGVHCE) is the EGF-like 31; calcium-binding domain. An EGF-like 32; calcium-binding domain is found at 1220–1264 (NVDDCTPFYDSVSLEPKCFNNGKCFDRVGGYNCICPPGFVGERCE). EGF-like domains are found at residues 1266–1304 (DVNE…RRCD), 1306–1345 (VVDG…ATCE), 1347–1383 (DART…ATCQ), and 1386–1424 (VVSP…LFCH). A glycan (O-linked (Fuc...) threonine; alternate) is linked at Thr1400. O-linked (GalNAc...) threonine; alternate glycosylation is present at Thr1400. LNR repeat units follow at residues 1447–1487 (CENE…PWKN), 1488–1529 (CTQS…CNPL), and 1530–1564 (YDQY…NMPE). Ca(2+) contacts are provided by Asn1458, Asp1473, and Asp1476. The N-linked (GlcNAc...) asparagine glycan is linked to Asn1487. Disulfide bonds link Cys1488–Cys1512, Cys1494–Cys1507, Cys1503–Cys1519, Cys1534–Cys1547, and Cys1543–Cys1559. Asp1500 lines the Ca(2+) pocket. A glycan (N-linked (GlcNAc...) asparagine) is linked at Asn1508. Positions 1515, 1518, 1540, 1555, and 1558 each coordinate Ca(2+). Asn1584 carries an N-linked (GlcNAc...) asparagine glycan. A helical membrane pass occupies residues 1731 to 1751 (AMFSMLVIPLLIIFVIMVVIV). Residues 1752-2522 (NKKRRREHGQ…QRTHIPEAFK (771 aa)) lie on the Cytoplasmic side of the membrane. 6 ANK repeats span residues 1877 to 1920 (DGFT…QLHN), 1925 to 1954 (TGET…DANV), 1958 to 1988 (MGRT…DLDA), 1992 to 2021 (DGTT…DVNA), 2025 to 2054 (FGKS…NKDM), and 2058 to 2087 (KEET…NRDI). 3 disordered regions span residues 2146–2229 (MKPS…MPLN), 2365–2404 (LMQA…PFCS), and 2449–2522 (LTPP…EAFK). A compositionally biased stretch (low complexity) spans 2184–2200 (SLLDSGSSGVLSPVDSL). Residues 2218–2229 (SPFQQSPSMPLN) show a composition bias toward polar residues. A compositionally biased stretch (low complexity) spans 2365-2390 (LMQAQQMQQQQNLQLHQSVQQQQHQN). Polar residues-rich tracts occupy residues 2391–2404 (SNAT…PFCS) and 2449–2469 (LTPP…SHQL). Residues 2479–2494 (PSPESPDQWSSSSPHS) are compositionally biased toward low complexity. The segment covering 2495–2514 (NMSDWSEGISSPPTSMQPQR) has biased composition (polar residues).

The protein belongs to the NOTCH family. O-glycosylated on the EGF-like domains. Contains both O-linked fucose and O-linked glucose. O-linked glycosylation by galnt11 is involved in determination of left/right symmetry: glycosylation promotes activation of notch1, possibly by promoting cleavage by adam17, modulating the balance between motile and immotile (sensory) cilia at the left-right organiser (LRO). Post-translationally, synthesized in the endoplasmic reticulum as an inactive form which is proteolytically cleaved by a furin-like convertase in the trans-Golgi network before it reaches the plasma membrane to yield an active, ligand-accessible form. Cleavage results in a C-terminal fragment N(TM) and a N-terminal fragment N(EC). Following ligand binding, it is cleaved by adam17 to yield a membrane-associated intermediate fragment called notch extracellular truncation (NEXT). Following endocytosis, this fragment is then cleaved by presenilin dependent gamma-secretase to release a Notch-derived peptide containing the intracellular domain (NICD) from the membrane.

It is found in the cell membrane. Its subcellular location is the nucleus. Functions as a receptor for membrane-bound ligands Jagged-1 (JAG1), Jagged-2 (JAG2) and Delta-1 (DLL1) to regulate cell-fate determination. Upon ligand activation through the released notch intracellular domain (NICD) it forms a transcriptional activator complex with RBPJ/RBPSUH and activates genes of the enhancer of split locus. Affects the implementation of differentiation, proliferation and apoptotic programs. Involved in angiogenesis; negatively regulates endothelial cell proliferation and migration and angiogenic sprouting. Involved in the maturation of both CD4(+) and CD8(+) cells in the thymus. Important for follicular differentiation and possibly cell fate selection within the follicle. During cerebellar development, functions as a receptor for neuronal DNER and is involved in the differentiation of Bergmann glia. Represses neuronal and myogenic differentiation. May play an essential role in postimplantation development, probably in some aspect of cell specification and/or differentiation. May be involved in mesoderm development, somite formation and neurogenesis. Involved in determination of left/right symmetry by modulating the balance between motile and immotile (sensory) cilia at the left-right organiser (LRO). In Xenopus tropicalis (Western clawed frog), this protein is Neurogenic locus notch homolog protein 1 (notch1).